Reading from the N-terminus, the 86-residue chain is Actinorhodin polyketide synthase acyl carrier protein (86 aa).

Residues 4 to 82 (LLTTDDLRRA…ELLDLINGAL (79 aa)) form the Carrier domain. Ser-42 is subject to O-(pantetheine 4'-phosphoryl)serine.

In terms of processing, 4'-phosphopantetheine is transferred from CoA to a specific serine of the apo-ACP-like protein.

The protein operates within antibiotic biosynthesis; actinorhodin biosynthesis. Functionally, acyl carrier protein. The protein is Actinorhodin polyketide synthase acyl carrier protein of Streptomyces coelicolor (strain ATCC BAA-471 / A3(2) / M145).